The following is a 512-amino-acid chain: tRNA modification GTPase gtpbp3, mitochondrial (512 aa).

The 189-residue stretch at 246–434 (GANIAIVGPP…LLNLLKLNLK (189 aa)) folds into the TrmE-type G domain. GTP contacts are provided by residues 253 to 260 (GPPNAGKS), 300 to 304 (DTAGL), and 375 to 378 (NKSD).

It belongs to the TRAFAC class TrmE-Era-EngA-EngB-Septin-like GTPase superfamily. TrmE GTPase family.

It is found in the mitochondrion. GTPase involved in the 5-carboxymethylaminomethyl modification (mnm(5)s(2)U34) of the wobble uridine base in mitochondrial tRNAs. In Dictyostelium discoideum (Social amoeba), this protein is tRNA modification GTPase gtpbp3, mitochondrial (gtpbp3).